The chain runs to 294 residues: Ribosomal RNA small subunit methyltransferase A (294 aa).

Residues Asn31, Leu33, Gly58, Glu79, Asp111, and Asn136 each coordinate S-adenosyl-L-methionine.

It belongs to the class I-like SAM-binding methyltransferase superfamily. rRNA adenine N(6)-methyltransferase family. RsmA subfamily.

The protein resides in the cytoplasm. The enzyme catalyses adenosine(1518)/adenosine(1519) in 16S rRNA + 4 S-adenosyl-L-methionine = N(6)-dimethyladenosine(1518)/N(6)-dimethyladenosine(1519) in 16S rRNA + 4 S-adenosyl-L-homocysteine + 4 H(+). Its function is as follows. Specifically dimethylates two adjacent adenosines (A1518 and A1519) in the loop of a conserved hairpin near the 3'-end of 16S rRNA in the 30S particle. May play a critical role in biogenesis of 30S subunits. The chain is Ribosomal RNA small subunit methyltransferase A from Lactobacillus acidophilus (strain ATCC 700396 / NCK56 / N2 / NCFM).